We begin with the raw amino-acid sequence, 308 residues long: Ornithine carbamoyltransferase (308 aa).

Residues 53–56 (STRT), Gln-80, Arg-104, and 131–134 (HPCQ) contribute to the carbamoyl phosphate site. Residues Asn-162, Asp-225, and 229-230 (SM) contribute to the L-ornithine site. Carbamoyl phosphate contacts are provided by residues 265–266 (CL) and Arg-293.

This sequence belongs to the aspartate/ornithine carbamoyltransferase superfamily. OTCase family.

The protein localises to the cytoplasm. It carries out the reaction carbamoyl phosphate + L-ornithine = L-citrulline + phosphate + H(+). Its pathway is amino-acid biosynthesis; L-arginine biosynthesis; L-arginine from L-ornithine and carbamoyl phosphate: step 1/3. Reversibly catalyzes the transfer of the carbamoyl group from carbamoyl phosphate (CP) to the N(epsilon) atom of ornithine (ORN) to produce L-citrulline. This Synechocystis sp. (strain ATCC 27184 / PCC 6803 / Kazusa) protein is Ornithine carbamoyltransferase (argF).